The sequence spans 70 residues: DNA-directed RNA polymerase subunit omega (70 aa).

The protein belongs to the RNA polymerase subunit omega family. The RNAP catalytic core consists of 2 alpha, 1 beta, 1 beta' and 1 omega subunit. When a sigma factor is associated with the core the holoenzyme is formed, which can initiate transcription.

The catalysed reaction is RNA(n) + a ribonucleoside 5'-triphosphate = RNA(n+1) + diphosphate. In terms of biological role, promotes RNA polymerase assembly. Latches the N- and C-terminal regions of the beta' subunit thereby facilitating its interaction with the beta and alpha subunits. The chain is DNA-directed RNA polymerase subunit omega from Shouchella clausii (strain KSM-K16) (Alkalihalobacillus clausii).